A 221-amino-acid polypeptide reads, in one-letter code: Small ribosomal subunit protein uS3c (221 aa).

Positions 39-109 (LRDYLKTRLA…RVIVHVVEIA (71 aa)) constitute a KH type-2 domain.

The protein belongs to the universal ribosomal protein uS3 family. As to quaternary structure, part of the 30S ribosomal subunit.

The protein localises to the plastid. The protein resides in the chloroplast. The sequence is that of Small ribosomal subunit protein uS3c (rps3) from Nephroselmis olivacea (Green alga).